Here is a 207-residue protein sequence, read N- to C-terminus: Inhibitor of hydrogen peroxide resistance (207 aa).

A DNA-binding region (H-T-H motif) is located at residues 163–182 (MNYIHQRTRISRSVVAEVLA).

This sequence belongs to the IprA family.

Its function is as follows. Involved in oxidative stress resistance. The protein is Inhibitor of hydrogen peroxide resistance of Escherichia coli O157:H7.